The sequence spans 291 residues: E3 ubiquitin-protein ligase RZFP34 (291 aa).

The CHY-type zinc finger occupies isoleucine 20–valine 96. 24 residues coordinate Zn(2+): cysteine 27, histidine 29, cysteine 40, cysteine 41, cysteine 47, cysteine 50, histidine 51, histidine 66, cysteine 78, cysteine 81, cysteine 91, cysteine 94, cysteine 103, cysteine 106, histidine 119, cysteine 120, cysteine 123, cysteine 126, histidine 136, cysteine 137, cysteine 140, cysteine 143, histidine 152, and cysteine 154. The CTCHY-type zinc finger occupies methionine 98–asparagine 162. The RING-type; atypical zinc finger occupies cysteine 163–serine 206. Serine 173 carries the phosphoserine modification. At threonine 178 the chain carries Phosphothreonine. A Phosphoserine modification is found at serine 208. Residues glutamine 271 to glycine 291 are disordered.

As to quaternary structure, interacts with SRK2D/2SNRK2.2, SRK2I/SNRK2.3 and SRK2E/SNRK2.6. Post-translationally, phosphorylated at Ser-173, Thr-178 and Ser-208 by SRK2E/SNRK2.6 in response to abscisic acid (ABA). Phosphorylation activates its E3 ubiquitin-protein ligase activity. Expressed in roots, leaves, and anthers and stigma of open flowers.

It is found in the nucleus. Its subcellular location is the cytoplasm. The protein resides in the endoplasmic reticulum. The enzyme catalyses S-ubiquitinyl-[E2 ubiquitin-conjugating enzyme]-L-cysteine + [acceptor protein]-L-lysine = [E2 ubiquitin-conjugating enzyme]-L-cysteine + N(6)-ubiquitinyl-[acceptor protein]-L-lysine.. The protein operates within protein modification; protein ubiquitination. Possesses E3 ubiquitin-protein ligase activity in vitro. Mediates mainly 'Lys-48'-linked polyubiquitination. Promotes abscisic acid (ABA)-induced stomatal closure, reactive oxygen species (ROS) production and drought tolerance. Involved in the regulation of stomatal aperture. The polypeptide is E3 ubiquitin-protein ligase RZFP34 (Arabidopsis thaliana (Mouse-ear cress)).